The chain runs to 249 residues: MSEQKITFADQKRKTVETAEFTEDGRYKRKVRSFVLRTGRLSEFQRNMMNDNWADFGLEHQNNYFDFAEIYGNTNPVILEIGFGMGKSLVEMAEQNPERNYLGIEVHTPGVGACIAYAVEKQVKNLRVICHDATEILQDCIADDSLGGLQLFFPDPWHKSKHHKRRIVQPNFVDNVMQKLQQSGFIHMATDWENYAEQMLDVLSQSKALTNTSKTNDFIPRPDFRPLTKFEQRGHRLGHGVWDLYFVKN.

S-adenosyl-L-methionine-binding residues include E80, E105, D132, and D155. D155 is an active-site residue. Substrate contacts are provided by residues K159, D191, and 228 to 231 (TKFE).

It belongs to the class I-like SAM-binding methyltransferase superfamily. TrmB family.

The enzyme catalyses guanosine(46) in tRNA + S-adenosyl-L-methionine = N(7)-methylguanosine(46) in tRNA + S-adenosyl-L-homocysteine. It participates in tRNA modification; N(7)-methylguanine-tRNA biosynthesis. Catalyzes the formation of N(7)-methylguanine at position 46 (m7G46) in tRNA. This chain is tRNA (guanine-N(7)-)-methyltransferase, found in Mannheimia succiniciproducens (strain KCTC 0769BP / MBEL55E).